The primary structure comprises 147 residues: Small ribosomal subunit protein uS12 (147 aa).

The protein belongs to the universal ribosomal protein uS12 family. As to quaternary structure, part of the 30S ribosomal subunit.

In terms of biological role, with S4 and S5 plays an important role in translational accuracy. Located at the interface of the 30S and 50S subunits. This Methanococcus maripaludis (strain DSM 14266 / JCM 13030 / NBRC 101832 / S2 / LL) protein is Small ribosomal subunit protein uS12.